The following is a 157-amino-acid chain: Endosomal/vacuolar adapter protein YPT35 (157 aa).

The region spanning 43 to 157 (ITDVLVGDYH…SPVITHFILN (115 aa)) is the PX domain.

The protein belongs to the YPT35 family.

It localises to the endosome membrane. It is found in the vacuole membrane. Recruits the lipid transfer protein VPS13 to endosomal and vacuolar membranes. This chain is Endosomal/vacuolar adapter protein YPT35 (YPT35), found in Debaryomyces hansenii (strain ATCC 36239 / CBS 767 / BCRC 21394 / JCM 1990 / NBRC 0083 / IGC 2968) (Yeast).